Here is a 93-residue protein sequence, read N- to C-terminus: Phosphoribosyl-ATP pyrophosphatase (93 aa).

The protein belongs to the PRA-PH family.

The protein resides in the cytoplasm. The catalysed reaction is 1-(5-phospho-beta-D-ribosyl)-ATP + H2O = 1-(5-phospho-beta-D-ribosyl)-5'-AMP + diphosphate + H(+). Its pathway is amino-acid biosynthesis; L-histidine biosynthesis; L-histidine from 5-phospho-alpha-D-ribose 1-diphosphate: step 2/9. The polypeptide is Phosphoribosyl-ATP pyrophosphatase (Mycolicibacterium vanbaalenii (strain DSM 7251 / JCM 13017 / BCRC 16820 / KCTC 9966 / NRRL B-24157 / PYR-1) (Mycobacterium vanbaalenii)).